The following is a 307-amino-acid chain: HPr kinase/phosphorylase (307 aa).

Catalysis depends on residues histidine 136 and lysine 157. 151-158 lines the ATP pocket; sequence GESGIGKS. Residue serine 158 coordinates Mg(2+). Residue aspartate 175 is the Proton acceptor; for phosphorylation activity. Proton donor; for dephosphorylation activity of the active site. An important for the catalytic mechanism of both phosphorylation and dephosphorylation region spans residues 198 to 207; the sequence is LEVRGMGIID. Glutamate 199 serves as a coordination point for Mg(2+). Residue arginine 240 is part of the active site. The important for the catalytic mechanism of dephosphorylation stretch occupies residues 261 to 266; the sequence is PIRPGR.

It belongs to the HPrK/P family. As to quaternary structure, homohexamer. It depends on Mg(2+) as a cofactor.

It catalyses the reaction [HPr protein]-L-serine + ATP = [HPr protein]-O-phospho-L-serine + ADP + H(+). The enzyme catalyses [HPr protein]-O-phospho-L-serine + phosphate + H(+) = [HPr protein]-L-serine + diphosphate. In terms of biological role, catalyzes the ATP- as well as the pyrophosphate-dependent phosphorylation of a specific serine residue in HPr, a phosphocarrier protein of the phosphoenolpyruvate-dependent sugar phosphotransferase system (PTS). HprK/P also catalyzes the pyrophosphate-producing, inorganic phosphate-dependent dephosphorylation (phosphorolysis) of seryl-phosphorylated HPr (P-Ser-HPr). The two antagonistic activities of HprK/P are regulated by several intracellular metabolites, which change their concentration in response to the absence or presence of rapidly metabolisable carbon sources (glucose, fructose, etc.) in the growth medium. Therefore, by controlling the phosphorylation state of HPr, HPrK/P is a sensor enzyme that plays a major role in the regulation of carbon metabolism and sugar transport: it mediates carbon catabolite repression (CCR), and regulates PTS-catalyzed carbohydrate uptake and inducer exclusion. This Clostridium novyi (strain NT) protein is HPr kinase/phosphorylase.